A 628-amino-acid chain; its full sequence is DNA primase (628 aa).

The segment at 40-64 (CPFHEERSPSFSVAEDKQIFHCFGC) adopts a CHC2-type zinc-finger fold. The Toprim domain occupies 269 to 351 (NTVLLFEGFM…DLSIVSIPEK (83 aa)). Positions 275, 319, and 321 each coordinate Mg(2+).

The protein belongs to the DnaG primase family. As to quaternary structure, monomer. Interacts with DnaB. Zn(2+) is required as a cofactor. Requires Mg(2+) as cofactor.

The catalysed reaction is ssDNA + n NTP = ssDNA/pppN(pN)n-1 hybrid + (n-1) diphosphate.. Functionally, RNA polymerase that catalyzes the synthesis of short RNA molecules used as primers for DNA polymerase during DNA replication. This Enterococcus faecalis (strain ATCC 700802 / V583) protein is DNA primase.